Here is a 299-residue protein sequence, read N- to C-terminus: AUGMIN subunit 1 (299 aa).

Residue S2 is modified to N-acetylserine. Coiled coils occupy residues 76-96 (RLKASEYRAQAARIREILESA) and 164-184 (RKAIQRLTYLKKILAQLEDDV).

Belongs to the HAUS1 family. As to quaternary structure, part of the augmin complex composed of 8 subunits. The complex acts on microtubules and interacts with gamma-tubulin in spindles and the phragmoplast. Interacts with AUG3.

The protein resides in the cytoplasm. It localises to the cytoskeleton. Its subcellular location is the spindle. It is found in the phragmoplast. Its function is as follows. Involved in microtubules reorganization during spindle and phragmoplast development. The chain is AUGMIN subunit 1 from Arabidopsis thaliana (Mouse-ear cress).